A 1649-amino-acid polypeptide reads, in one-letter code: PHD and RING finger domain-containing protein 1 (1649 aa).

Positions 1 to 79 (MDDDSLDELV…RSGSEDSEDD (79 aa)) are disordered. Ser-5 is subject to Phosphoserine. Residues 54 to 79 (TDGEDEGASEEEDLEDRSGSEDSEDD) show a composition bias toward acidic residues. Residues 108 to 149 (CPICLNAFRDQAVGTPENCAHYFCLDCIVEWSKNANSCPVDR) form an RING-type; degenerate zinc finger. The PHD-type zinc finger occupies 183–233 (PTFCEVCGRSDREDRLLLCDGCDAGYHMECLDPPLQEVPVDEWFCPECAAP). The segment at 324-398 (VYQRPLTPRT…TRSRIARTLG (75 aa)) is disordered. Phosphothreonine is present on Thr-330. Basic residues predominate over residues 334–353 (PARRKRKTRRRKKVPGRKKT). A compositionally biased stretch (low complexity) spans 354 to 366 (PSGPSAKSKSSAT). A compositionally biased stretch (basic residues) spans 367-382 (RSKKRQHRVKKRRGKK). Ser-445 and Ser-455 each carry phosphoserine. Disordered regions lie at residues 534–600 (KRAA…GAPV), 644–871 (SAAS…PKAQ), 888–1240 (FGTE…KAPL), and 1281–1395 (IQLD…PLLR). Residues 568–589 (SPAQGPSGNRPQSTGLSCQGRS) are compositionally biased toward polar residues. Composition is skewed to basic and acidic residues over residues 685–697 (IRRD…RDAA) and 727–742 (TRAE…REPG). The span at 786–796 (AHSSQLSSPGF) shows a compositional bias: polar residues. Basic and acidic residues predominate over residues 802 to 812 (PVDDKEQRKEN). Phosphoserine is present on residues Ser-814, Ser-845, Ser-846, Ser-864, Ser-867, and Ser-915. 2 stretches are compositionally biased toward polar residues: residues 835 to 848 (PTGS…SSPE) and 859 to 871 (ITRT…PKAQ). Thr-917 is subject to Phosphothreonine. Phosphoserine occurs at positions 936, 973, and 991. The segment covering 988 to 999 (RPPSRSRSTSSS) has biased composition (low complexity). A compositionally biased stretch (basic residues) spans 1000–1011 (RSRKKAKRKRVS). Basic and acidic residues predominate over residues 1012–1030 (REHGRTRSGTRSESRDRSS). The span at 1043–1053 (RRQRSKAKSRR) shows a compositional bias: basic residues. The segment covering 1054 to 1063 (SSSDRSSSRE) has biased composition (basic and acidic residues). Positions 1064–1090 (RAKRKKAKDKSREHRRGPWGHSRRTSR) are enriched in basic residues. Residues 1091–1101 (SRSGSPGSSSY) are compositionally biased toward low complexity. The span at 1106 to 1118 (SRKKKKRRSASRP) shows a compositional bias: basic residues. Residues Ser-1124 and Ser-1128 each carry the phosphoserine modification. Composition is skewed to basic and acidic residues over residues 1141 to 1151 (RSHERPDRKES) and 1181 to 1198 (REKW…KGAV). Phosphoserine occurs at positions 1202 and 1229. Residues 1284–1297 (DDMSSPPSPESTDS) are compositionally biased toward low complexity. Positions 1345–1356 (HLLRPDAAEKAE) are enriched in basic and acidic residues. Phosphoserine occurs at positions 1359, 1360, and 1371. The residue at position 1404 (Thr-1404) is a Phosphothreonine. Disordered regions lie at residues 1407-1439 (LQES…WDME), 1455-1486 (FPSH…AQPS), 1526-1556 (TPAS…EKTK), and 1630-1649 (MRRH…GAEG). A compositionally biased stretch (polar residues) spans 1531 to 1540 (PASQATAASN). Over residues 1541–1556 (SEEKTPAPRLAAEKTK) the composition is skewed to basic and acidic residues. A coiled-coil region spans residues 1549-1579 (RLAAEKTKKEEYMKKLHMQERAVEEVKLAIK).

Interacts with POLR2A (via the C-terminal domain).

This is PHD and RING finger domain-containing protein 1 (PHRF1) from Homo sapiens (Human).